We begin with the raw amino-acid sequence, 313 residues long: Methionyl-tRNA formyltransferase (313 aa).

111-114 (SLLP) provides a ligand contact to (6S)-5,6,7,8-tetrahydrofolate.

It belongs to the Fmt family.

It carries out the reaction L-methionyl-tRNA(fMet) + (6R)-10-formyltetrahydrofolate = N-formyl-L-methionyl-tRNA(fMet) + (6S)-5,6,7,8-tetrahydrofolate + H(+). Its function is as follows. Attaches a formyl group to the free amino group of methionyl-tRNA(fMet). The formyl group appears to play a dual role in the initiator identity of N-formylmethionyl-tRNA by promoting its recognition by IF2 and preventing the misappropriation of this tRNA by the elongation apparatus. In Mesoplasma florum (strain ATCC 33453 / NBRC 100688 / NCTC 11704 / L1) (Acholeplasma florum), this protein is Methionyl-tRNA formyltransferase.